Consider the following 82-residue polypeptide: Leucinostatins biosynthesis cluster protein M (82 aa).

A disordered region spans residues 34-82 (ARNETHDPSGPRAPVSSMRLGPRSRPYHHGTARLRGSPNCSRDSSSAAT). Polar residues predominate over residues 71–82 (PNCSRDSSSAAT).

Functionally, part of the gene cluster that mediates the biosynthesis of the lipopeptide antibiotics leucinostatins that show extensive biological activities, including antimalarial, antiviral, antibacterial, antifungal, and antitumor activities, as well as phytotoxic. The function of lcsM within the leucinostatins biosynthesis has not been identified yet. The sequence is that of Leucinostatins biosynthesis cluster protein M from Purpureocillium lilacinum (Paecilomyces lilacinus).